The sequence spans 527 residues: Peptide chain release factor 3 (527 aa).

Positions A11–L278 constitute a tr-type G domain. GTP is bound by residues S20–T27, D87–H91, and N141–D144.

The protein belongs to the TRAFAC class translation factor GTPase superfamily. Classic translation factor GTPase family. PrfC subfamily.

It is found in the cytoplasm. In terms of biological role, increases the formation of ribosomal termination complexes and stimulates activities of RF-1 and RF-2. It binds guanine nucleotides and has strong preference for UGA stop codons. It may interact directly with the ribosome. The stimulation of RF-1 and RF-2 is significantly reduced by GTP and GDP, but not by GMP. This is Peptide chain release factor 3 from Saccharophagus degradans (strain 2-40 / ATCC 43961 / DSM 17024).